The following is a 413-amino-acid chain: PAB1-binding protein 2 (413 aa).

Over residues 1-23 (MSTETTKPSITTTPTTVLVSPNT) the composition is skewed to low complexity. Residues 1–36 (MSTETTKPSITTTPTTVLVSPNTLKRKKGEDTSEEQ) are disordered. 3 consecutive KH domains span residues 66–130 (DVHL…YGMI), 148–213 (EISI…TFYI), and 330–394 (FVQQ…IMLI).

As to quaternary structure, interacts with PAB1.

It is found in the nucleus. The polypeptide is PAB1-binding protein 2 (PBP2) (Saccharomyces cerevisiae (strain ATCC 204508 / S288c) (Baker's yeast)).